The chain runs to 156 residues: Small ribosomal subunit protein uS7 (156 aa).

This sequence belongs to the universal ribosomal protein uS7 family. As to quaternary structure, part of the 30S ribosomal subunit. Contacts proteins S9 and S11.

Its function is as follows. One of the primary rRNA binding proteins, it binds directly to 16S rRNA where it nucleates assembly of the head domain of the 30S subunit. Is located at the subunit interface close to the decoding center, probably blocks exit of the E-site tRNA. This chain is Small ribosomal subunit protein uS7, found in Streptomyces avermitilis (strain ATCC 31267 / DSM 46492 / JCM 5070 / NBRC 14893 / NCIMB 12804 / NRRL 8165 / MA-4680).